The sequence spans 431 residues: MTEFSPREIVSELDRYIVGHTEAKKAVAVALRNRWRRRRVPADLRDEVTPKNILLIGPTGVGKTEIARRLAKLAQAPFLKVEATKFTEVGYVGRDVDQIVRDLVESALSMVRDKRRGGVKAKAEAAAEERILDALTGPGSTAARESFRKKLRAGELDDKEVELQLADTGGGGMFEIPGQPGASVLNLSEMMKSFGGGRTKTHKTTVVGAWAPLIAEESDKLLDQEALTQEALELAENHGIVFLDEIDKVASSSQRGGADVSREGVQRDLLPLIEGTTVSTKYGPVKTDHILFIASGAFHVAKPSDLLPELQGRLPIRVELKGLTRDDLRRILTEPEANLIRQHQALLLTEGVTLVFTEEAIDAVADAAVAVNASVENIGARRLQTILEKVVEEISFTAADRSGETVTVDADYVQARIGALAANADLSRFIL.

ATP is bound by residues Val18, 60–65 (GVGKTE), Asp244, Glu309, and Arg381.

It belongs to the ClpX chaperone family. HslU subfamily. In terms of assembly, a double ring-shaped homohexamer of HslV is capped on each side by a ring-shaped HslU homohexamer. The assembly of the HslU/HslV complex is dependent on binding of ATP.

The protein resides in the cytoplasm. Its function is as follows. ATPase subunit of a proteasome-like degradation complex; this subunit has chaperone activity. The binding of ATP and its subsequent hydrolysis by HslU are essential for unfolding of protein substrates subsequently hydrolyzed by HslV. HslU recognizes the N-terminal part of its protein substrates and unfolds these before they are guided to HslV for hydrolysis. The chain is ATP-dependent protease ATPase subunit HslU from Caulobacter sp. (strain K31).